A 363-amino-acid chain; its full sequence is Probable L-tyrosine/L-aspartate decarboxylase (363 aa).

Position 208 is an N6-(pyridoxal phosphate)lysine (Lys208).

It belongs to the group II decarboxylase family. MfnA subfamily. It depends on pyridoxal 5'-phosphate as a cofactor.

The catalysed reaction is L-tyrosine + H(+) = tyramine + CO2. It carries out the reaction L-aspartate + H(+) = beta-alanine + CO2. Its pathway is cofactor biosynthesis; methanofuran biosynthesis. It participates in cofactor biosynthesis; coenzyme A biosynthesis. In terms of biological role, catalyzes the decarboxylation of L-tyrosine to produce tyramine for methanofuran biosynthesis. Can also catalyze the decarboxylation of L-aspartate to produce beta-alanine for coenzyme A (CoA) biosynthesis. This is Probable L-tyrosine/L-aspartate decarboxylase from Methanothermobacter thermautotrophicus (strain ATCC 29096 / DSM 1053 / JCM 10044 / NBRC 100330 / Delta H) (Methanobacterium thermoautotrophicum).